Reading from the N-terminus, the 550-residue chain is MVPTRSTARMLANLKIRTGMFWVLSLFSLTLLFSTASAWWAALGSDQQITELDQTAHQSDRLNNALLMAIRSSANVSSGFIEQLGGHDESAGKRMALSVELNNKSQALVDEFVENAREPALRGLATELQATFAEYAKAVAGQREATRQRSLEQYFKVNSDAGNAMGRLQTLRQQLVTTLSERGQQIMLESDRRLARAQLLSLCLLGVTVVLAVLCWAFIAQRVLHPLREAGGHFRRIASGDLSVPVQGQGNNEIGQLFHELQRMQQSQRDTLGQINNCARQLDAAATALNAVTEESANNLRQQGQELEQAATAVTEMTTAVEEVARNAITTSQTTSESNQLAAQSRRQVSENIDGTEAMTREIQTSSAHLQQLVGQVRDIGKVLEVIRSVSEQTNLLALNAAIEAARAGEAGRGFAVVADEVRTLAYRTQQSTQEIEQMIGSVQAGTEAAVASMQASTNRAQSTLDVTLASGQVLEGIYSAIGEINERNLVIASAAEEQAQVAREVDRNLLNIRELSNHSAAGAQQTSEASKALSGLVGEMTALVGRFKV.

Residues 1-19 (MVPTRSTARMLANLKIRTG) lie on the Cytoplasmic side of the membrane. Residues 20–40 (MFWVLSLFSLTLLFSTASAWW) traverse the membrane as a helical segment. The Periplasmic portion of the chain corresponds to 41 to 198 (AALGSDQQIT…ESDRRLARAQ (158 aa)). Positions 44 to 196 (GSDQQITELD…MLESDRRLAR (153 aa)) are ligand-binding domain. The benzoate site is built by Arg-71 and Asn-75. Residues Arg-71, Asn-75, and Tyr-135 each coordinate salicylate. 71 to 78 (RSSANVSS) is a 3,4-dihydroxybenzoate binding site. Residues 71-78 (RSSANVSS), Tyr-135, Gln-142, and Asn-158 contribute to the L-quinate site. Gln-169 is a 3,4-dihydroxybenzoate binding site. The helical transmembrane segment at 199-219 (LLSLCLLGVTVVLAVLCWAFI) threads the bilayer. The Cytoplasmic portion of the chain corresponds to 220 to 550 (AQRVLHPLRE…MTALVGRFKV (331 aa)). An HAMP domain is found at 221-273 (QRVLHPLREAGGHFRRIASGDLSVPVQGQGNNEIGQLFHELQRMQQSQRDTLG). The Methyl-accepting transducer domain maps to 278 to 514 (CARQLDAAAT…EVDRNLLNIR (237 aa)).

The protein belongs to the methyl-accepting chemotaxis (MCP) protein family. Ligand free PcaY_PP-ligand-binding domain (LBD) is present in a monomer-dimer equilibrium. Only the dimeric LBD is able to bind ligands which in turn causes dimer stabilization.

The protein localises to the cell inner membrane. Functionally, chemotactic-signal transducers respond to changes in the concentration of attractants and repellents in the environment, transduce a signal from the outside to the inside of the cell, and facilitate sensory adaptation through the variation of the level of methylation. PcaY recognizes a wide range of compounds containing a C6-membered ring with a carboxylate group. Binds preferentially compounds that serve as carbon sources and among them those that rapidly promote growth. Tightest binding compounds are quinate, shikimate, 3-dehydroshikimate and protocatechuate, which are at the interception of the biosynthetic shikimate and catabolic quinate pathways. The protein is Methyl-accepting chemotaxis protein PcaY of Pseudomonas putida (strain ATCC 47054 / DSM 6125 / CFBP 8728 / NCIMB 11950 / KT2440).